The chain runs to 238 residues: Adapter protein MecA (238 aa).

The span at 120–136 (QQQKDNKQNQDQNERNR) shows a compositional bias: basic and acidic residues. The tract at residues 120 to 139 (QQQKDNKQNQDQNERNRQNT) is disordered.

This sequence belongs to the MecA family. As to quaternary structure, homodimer.

Enables the recognition and targeting of unfolded and aggregated proteins to the ClpC protease or to other proteins involved in proteolysis. This Staphylococcus saprophyticus subsp. saprophyticus (strain ATCC 15305 / DSM 20229 / NCIMB 8711 / NCTC 7292 / S-41) protein is Adapter protein MecA.